A 381-amino-acid chain; its full sequence is Homoserine O-succinyltransferase (381 aa).

The AB hydrolase-1 domain occupies Asn45–Asp360. The Nucleophile role is filled by Ser151. Arg221 contacts substrate. Catalysis depends on residues Asp321 and His354. Asp355 is a binding site for substrate.

This sequence belongs to the AB hydrolase superfamily. MetX family. In terms of assembly, homodimer.

The protein resides in the cytoplasm. The enzyme catalyses L-homoserine + succinyl-CoA = O-succinyl-L-homoserine + CoA. Its pathway is amino-acid biosynthesis; L-methionine biosynthesis via de novo pathway; O-succinyl-L-homoserine from L-homoserine: step 1/1. Its function is as follows. Transfers a succinyl group from succinyl-CoA to L-homoserine, forming succinyl-L-homoserine. The sequence is that of Homoserine O-succinyltransferase from Burkholderia cenocepacia (strain HI2424).